Reading from the N-terminus, the 338-residue chain is Lipoate-protein ligase A (338 aa).

In terms of domain architecture, BPL/LPL catalytic spans 29-216 (PATQRVLFLW…AFFAHYGERV (188 aa)). Residues Arg71, 76 to 79 (GAVF), and Lys134 contribute to the ATP site. Residue Lys134 participates in (R)-lipoate binding.

This sequence belongs to the LplA family. As to quaternary structure, monomer.

The protein localises to the cytoplasm. It catalyses the reaction L-lysyl-[lipoyl-carrier protein] + (R)-lipoate + ATP = N(6)-[(R)-lipoyl]-L-lysyl-[lipoyl-carrier protein] + AMP + diphosphate + H(+). The protein operates within protein modification; protein lipoylation via exogenous pathway; protein N(6)-(lipoyl)lysine from lipoate: step 1/2. It participates in protein modification; protein lipoylation via exogenous pathway; protein N(6)-(lipoyl)lysine from lipoate: step 2/2. Functionally, catalyzes both the ATP-dependent activation of exogenously supplied lipoate to lipoyl-AMP and the transfer of the activated lipoyl onto the lipoyl domains of lipoate-dependent enzymes. The polypeptide is Lipoate-protein ligase A (Salmonella arizonae (strain ATCC BAA-731 / CDC346-86 / RSK2980)).